Consider the following 498-residue polypeptide: Beta-amylase 5 (498 aa).

Residues Asp56, His96, and Asp104 each coordinate substrate. Glu189 serves as the catalytic Proton donor. Substrate contacts are provided by Lys298, His303, and Thr345. The active-site Proton acceptor is Glu383. Substrate-binding positions include 384 to 385 (NA) and Arg423.

This sequence belongs to the glycosyl hydrolase 14 family. As to expression, detected in phloem sieve elements.

The protein localises to the cytoplasm. It catalyses the reaction Hydrolysis of (1-&gt;4)-alpha-D-glucosidic linkages in polysaccharides so as to remove successive maltose units from the non-reducing ends of the chains.. Its function is as follows. Beta-amylase activity. Major cytosolic beta-amylase isoform in rosette leaves and inflorescences stems. This chain is Beta-amylase 5 (BAM5), found in Arabidopsis thaliana (Mouse-ear cress).